The chain runs to 179 residues: Large ribosomal subunit protein uL6 (179 aa).

The protein belongs to the universal ribosomal protein uL6 family. In terms of assembly, part of the 50S ribosomal subunit.

Its function is as follows. This protein binds to the 23S rRNA, and is important in its secondary structure. It is located near the subunit interface in the base of the L7/L12 stalk, and near the tRNA binding site of the peptidyltransferase center. The polypeptide is Large ribosomal subunit protein uL6 (Bacillus velezensis (strain DSM 23117 / BGSC 10A6 / LMG 26770 / FZB42) (Bacillus amyloliquefaciens subsp. plantarum)).